Here is a 286-residue protein sequence, read N- to C-terminus: 3-hydroxyanthranilate 3,4-dioxygenase (286 aa).

Residues 1 to 160 (MERCVRVKSW…SEQYRTGKPN (160 aa)) form a domain A (catalytic) region. R43 lines the O2 pocket. 3 residues coordinate Fe cation: H47, E53, and H91. Position 53 (E53) interacts with substrate. Substrate-binding residues include R95 and E105. The segment at 161-177 (PDQLLKEPPFPLSTRSV) is linker. Residues 178–286 (MEPMSLKAWL…QDPACKKPLG (109 aa)) are domain B.

This sequence belongs to the 3-HAO family. Monomer. Fe(2+) serves as cofactor.

It is found in the cytoplasm. The protein localises to the cytosol. It catalyses the reaction 3-hydroxyanthranilate + O2 = (2Z,4Z)-2-amino-3-carboxymuconate 6-semialdehyde. The protein operates within cofactor biosynthesis; NAD(+) biosynthesis; quinolinate from L-kynurenine: step 3/3. In terms of biological role, catalyzes the oxidative ring opening of 3-hydroxyanthranilate to 2-amino-3-carboxymuconate semialdehyde, which spontaneously cyclizes to quinolinate. This Rattus norvegicus (Rat) protein is 3-hydroxyanthranilate 3,4-dioxygenase (Haao).